We begin with the raw amino-acid sequence, 504 residues long: Ribose import ATP-binding protein RbsA (504 aa).

ABC transporter domains lie at 6–242 and 252–495; these read LELK…VGRR and VRHG…VGKT. 38–45 is an ATP binding site; sequence GENGAGKS.

Belongs to the ABC transporter superfamily. Ribose importer (TC 3.A.1.2.1) family. The complex is composed of an ATP-binding protein (RbsA), two transmembrane proteins (RbsC) and a solute-binding protein (RbsB).

The protein resides in the cell inner membrane. The catalysed reaction is D-ribose(out) + ATP + H2O = D-ribose(in) + ADP + phosphate + H(+). Part of the ABC transporter complex RbsABC involved in ribose import. Responsible for energy coupling to the transport system. In Photobacterium profundum (strain SS9), this protein is Ribose import ATP-binding protein RbsA.